Consider the following 527-residue polypeptide: EGF domain-specific O-linked N-acetylglucosamine transferase (527 aa).

Residues 1–19 (MLMLLVFGVLLHEVPLSGQ) form the signal peptide. The Required for optimal activity signature appears at 295–297 (DYD). N-linked (GlcNAc...) asparagine glycosylation is present at Asn354. The Prevents secretion from ER signature appears at 524–527 (HDEL).

This sequence belongs to the glycosyltransferase 61 family. Widely expressed. Expressed in brain, heart, kidney, lung, skeletal muscles and thymus. Highest expression is observed in lung and the lowest in skeletal muscles.

The protein resides in the endoplasmic reticulum lumen. The enzyme catalyses L-seryl-[protein] + UDP-N-acetyl-alpha-D-glucosamine = 3-O-(N-acetyl-beta-D-glucosaminyl)-L-seryl-[protein] + UDP + H(+). The catalysed reaction is L-threonyl-[protein] + UDP-N-acetyl-alpha-D-glucosamine = 3-O-(N-acetyl-beta-D-glucosaminyl)-L-threonyl-[protein] + UDP + H(+). In terms of biological role, catalyzes the transfer of a single N-acetylglucosamine from UDP-GlcNAc to a serine or threonine residue in extracellular proteins resulting in their modification with a beta-linked N-acetylglucosamine (O-GlcNAc). Specifically glycosylates the Thr residue located between the fifth and sixth conserved cysteines of folded EGF-like domains. This is EGF domain-specific O-linked N-acetylglucosamine transferase (Eogt) from Mus musculus (Mouse).